The following is a 55-amino-acid chain: Large ribosomal subunit protein bL33 (55 aa).

It belongs to the bacterial ribosomal protein bL33 family.

The chain is Large ribosomal subunit protein bL33 from Methylobacterium sp. (strain 4-46).